The chain runs to 860 residues: Leucine--tRNA ligase (860 aa).

The short motif at 42–52 is the 'HIGH' region element; it reads PYPSGRLHMGH. Residues 619-623 carry the 'KMSKS' region motif; sequence KMSKS. ATP is bound at residue Lys-622.

This sequence belongs to the class-I aminoacyl-tRNA synthetase family.

The protein resides in the cytoplasm. It carries out the reaction tRNA(Leu) + L-leucine + ATP = L-leucyl-tRNA(Leu) + AMP + diphosphate. This Pectobacterium atrosepticum (strain SCRI 1043 / ATCC BAA-672) (Erwinia carotovora subsp. atroseptica) protein is Leucine--tRNA ligase.